Reading from the N-terminus, the 610-residue chain is Pyruvate decarboxylase 1 (610 aa).

Substrate contacts are provided by D72 and H159. The tract at residues 437 to 519 (DSWFNCQKLR…FLINNGGYTI (83 aa)) is thiamine pyrophosphate binding. Residues D487, N514, and G516 each contribute to the Mg(2+) site. E520 contacts substrate.

The protein belongs to the TPP enzyme family. In terms of assembly, homotetramer. The cofactor is a metal cation. It depends on thiamine diphosphate as a cofactor.

It catalyses the reaction a 2-oxocarboxylate + H(+) = an aldehyde + CO2. This is Pyruvate decarboxylase 1 (PDC1) from Zea mays (Maize).